Consider the following 425-residue polypeptide: MDRNKEIFEESKKYMPGGVNSPVRSFGSVGINPPVIKSGKGAMIKDENGNEYIDFVLAWGPMILGHCDEDVVEAIKKTSEESIAFGASTKLELDLAKILCETLDNVDMIRMVNSGTEATMSAVKLARGYTKKDKIIKFAGCYHGHFDGFLIEAGSGVLTEGIPGCLGVPEESIKNTLIGIYNDEKQVEELFEKYGNDIAGIIIEPVAGNMGVVKCDPKFMRKLRELCDKYEALLIFDEVMCGFRVAYKGAQTLFDVKPDLVTYAKIMGGGLPCGAYGGRREIMENLSPLGGVYQAGTMSGNPIVMSAGLATVKKLYENPSYYDHIEKIGSKLEKGIIEIAKKKGLGLVVNRQGGMMTLFFTDLKEVKCYDDVKTCDGERFKRYFLHMLNKGFNIPPSQFEAMFLSVKHTEEHIDKFLEAFESFEG.

The residue at position 265 (lysine 265) is an N6-(pyridoxal phosphate)lysine.

Belongs to the class-III pyridoxal-phosphate-dependent aminotransferase family. HemL subfamily. In terms of assembly, homodimer. Pyridoxal 5'-phosphate is required as a cofactor.

The protein localises to the cytoplasm. It carries out the reaction (S)-4-amino-5-oxopentanoate = 5-aminolevulinate. It functions in the pathway porphyrin-containing compound metabolism; protoporphyrin-IX biosynthesis; 5-aminolevulinate from L-glutamyl-tRNA(Glu): step 2/2. This Clostridium perfringens (strain SM101 / Type A) protein is Glutamate-1-semialdehyde 2,1-aminomutase.